The primary structure comprises 96 residues: DNA-binding protein HmvA (96 aa).

Positions 52–55 (KTIK) are interaction with DNA.

Belongs to the archaeal histone HMF family. As to quaternary structure, homodimer. Dimers then assemble into higher oligomers, with the DNA wrapped around the protein core.

The protein localises to the cytoplasm. It is found in the chromosome. Its function is as follows. Binds and compact DNA (95 to 150 base pairs) to form nucleosome-like structures that contain positive DNA supercoils. Increases the resistance of DNA to thermal denaturation (in vitro). The polypeptide is DNA-binding protein HmvA (hmvA) (Methanocaldococcus jannaschii (strain ATCC 43067 / DSM 2661 / JAL-1 / JCM 10045 / NBRC 100440) (Methanococcus jannaschii)).